The following is a 460-amino-acid chain: Cysteine--tRNA ligase (460 aa).

Position 28 (Cys28) interacts with Zn(2+). Positions Val30–His40 match the 'HIGH' region motif. Zn(2+)-binding residues include Cys209, His234, and Glu238. The short motif at Lys266–Ser270 is the 'KMSKS' region element. ATP is bound at residue Lys269.

This sequence belongs to the class-I aminoacyl-tRNA synthetase family. As to quaternary structure, monomer. It depends on Zn(2+) as a cofactor.

It localises to the cytoplasm. The catalysed reaction is tRNA(Cys) + L-cysteine + ATP = L-cysteinyl-tRNA(Cys) + AMP + diphosphate. The sequence is that of Cysteine--tRNA ligase from Shewanella frigidimarina (strain NCIMB 400).